Reading from the N-terminus, the 1682-residue chain is MSQDPERDDVTASATASASASAPASASAHYSGSSLSVRWVQGFPSQNVHFVNDQTICYPSGNFVIFINLETKKKTVLQCINGIVGVMATNVPSEVVAFSDRRFKPVIYIYSFPSLTRKNKLKGDILLDYTLLCFSYCGTYLASYSSLPEFELALWNWEASAILCKKSNPGMDVSQMSFNPMNWHQMCLSSSSAMSVWTIERSNQEHHFRIRSVKLPLEDATFLNEPDMLFPTTLPKDLIYGPVLPLSAIAGLVGEEAETFRPKDDIYPLLHPTMHCWTPSSDLYVGCEEGHLLMINTETLKVTVLQKAEEFPLPDGAPLINPLTLVYQKDGILASGIDGVIYSFIIKDSKYQVKTFLEFDGPVTHLVFSPSYKMLLIQTDKGSVYIYTFGAEMPLDKLLDACDGKVQAVSFITPGTKYFLTLTSSGEVSTVSLEDCNCTSRIFLKTQATALACSPSSPTAAVGTVDGYVYFLNILDVESPQMIHQAFLSQSPVKIVTYDQRGIFLLVGTEEGNIFVIDARPSKSFQIFGFTETGKDILQISTVSVMESDVVEVLVLYPLPDMGRSRLEYFTLPVMLPEVVPENFSDERGRLKDDLTHKYLYEVEHTLSSAVLGFTGSKIFGFCSQVPYICSYVMPVKEHTGVLVLKPHQKVQSKQYGSGTIYLSSHGLWLMTIAKCGILCIRDMFSMETFVRCRSHSHQGRGIQNMKMSLDGQHILVNGKDDNTLVCLKWKRLGANIASEIFEHSRPLVLHLSQTVESESVYLALSRESTNEQQEETTESQKHLNSDSSEEEAVIDHKMIPWIQQKMEEAIKKEVRIFSPRRKEIKRGIKELAQVIAMMMEENEKVDIIAKLDEQEFCLDADELERLHDECEEEVAKIRKDVEMHNLAQSYLTELIKEECWNSMAVKGRALKCFHIPYVVDNFPMKERTEEELQELSKVMQQKKTEIECLKLRKEIVEVQATTTIAKKHHEEEEEEEEDEERTIKTTSLPNYLLGSLSTDFGADTSLLTSQLDLHSREEKINQIILLKDIIYNIKRNFNSEFDAAYKQKEIEIARVKEKNVRIAEIISDLELEETVWQPVFEDSEKPERALVVEDDEISFKKYIAPWQRAKIKEVVSTYEMERLQQARISDERQRGLMDMMGGVLEVKKEDILRMVIPQPPFMAKADALWSEDERKQFKEYEKKVKELNEERDKYRKSLEAELKKLQNSIQESTQNFDDHLKRLFERRVKAEMVINQEELKINNIIFSLLLDEELSSREQFLNNYLLKKQEEKTKTAEAIQKAREDLDVFKEHHDMLVAEDKILDRSFKKEFSDILGHQVDVLYKLFKRRPRVHKQKTQADVTSLVPYGERPGSAKLNKENLAQLMKSMDELDNINNMPEGLDPSVWEHFCSTRRAKVENEYKVKQKAACLLEMTTFLRKRMEEDDVVHHEIEKVFHELIRLQDEKVRFQVNLTVQILLKQGQVELENFQLMLEYSDAILINKNIIEDLNSVIRTQGQKKVASMMESKEVHKGIYQIEWEHKKMEMEMEDLNQRAWDIEMLFFSRDRQKYLNEPNYENVIAIQIGIMEQTISVIDKTHKKNVENCKKLLKKLGKYSNQKDVANYTLSCNLREELVAVSERQDICNEIGSKLTCEKIARERYDNQLKQQKLLNISKQQAEQISILQAEVERLRMKTFPALIPM.

WD repeat units lie at residues 168–207 (NPGM…QEHH), 262–305 (PKDD…VTVL), 315–354 (DGAP…YQVK), 358–397 (EFDG…PLDK), 488–527 (LSQS…SFQI), and 697–738 (SHQG…ANIA). The disordered stretch occupies residues 767–790 (RESTNEQQEETTESQKHLNSDSSE). Coiled coils occupy residues 926–960 (KERT…VEVQ) and 1171–1223 (SEDE…HLKR).

Belongs to the CFAP43 family. As to expression, expressed in testis. Expressed in the lung, brain, oviduct and nasal cavity.

Its subcellular location is the cell projection. It localises to the cilium. The protein localises to the flagellum. It is found in the cytoplasm. The protein resides in the cytoskeleton. Its subcellular location is the flagellum axoneme. It localises to the cilium axoneme. Flagellar protein involved in sperm flagellum axoneme organization and function. Involved in the regulation of the beating frequency of motile cilia on the epithelial cells of the respiratory tract. The chain is Cilia- and flagella-associated protein 43 from Mus musculus (Mouse).